A 149-amino-acid chain; its full sequence is Large ribosomal subunit protein bL9 (149 aa).

The protein belongs to the bacterial ribosomal protein bL9 family.

In terms of biological role, binds to the 23S rRNA. In Thermotoga petrophila (strain ATCC BAA-488 / DSM 13995 / JCM 10881 / RKU-1), this protein is Large ribosomal subunit protein bL9.